The following is a 430-amino-acid chain: Gamma-glutamyl phosphate reductase (430 aa).

This sequence belongs to the gamma-glutamyl phosphate reductase family.

It localises to the cytoplasm. The enzyme catalyses L-glutamate 5-semialdehyde + phosphate + NADP(+) = L-glutamyl 5-phosphate + NADPH + H(+). The protein operates within amino-acid biosynthesis; L-proline biosynthesis; L-glutamate 5-semialdehyde from L-glutamate: step 2/2. Catalyzes the NADPH-dependent reduction of L-glutamate 5-phosphate into L-glutamate 5-semialdehyde and phosphate. The product spontaneously undergoes cyclization to form 1-pyrroline-5-carboxylate. The sequence is that of Gamma-glutamyl phosphate reductase from Methylococcus capsulatus (strain ATCC 33009 / NCIMB 11132 / Bath).